Consider the following 260-residue polypeptide: 14-3-3-like protein (260 aa).

A disordered region spans residues 240-260; that stretch reads DMQDDGGDEIKEAAPKPDEQY. The segment covering 247-260 has biased composition (basic and acidic residues); that stretch reads DEIKEAAPKPDEQY.

Belongs to the 14-3-3 family.

The sequence is that of 14-3-3-like protein from Oenothera elata subsp. hookeri (Hooker's evening primrose).